The sequence spans 139 residues: Cytochrome c-551 (139 aa).

Positions 1-20 (MTRTLAVVLAMTFSAAPVFA) are cleaved as a signal peptide. Residues cysteine 34, cysteine 37, histidine 38, and methionine 116 each contribute to the heme c site.

This sequence belongs to the cytochrome c family. Binds 1 heme c group covalently per subunit.

In Roseobacter denitrificans (strain ATCC 33942 / OCh 114) (Erythrobacter sp. (strain OCh 114)), this protein is Cytochrome c-551.